The sequence spans 288 residues: Elongation factor Ts (288 aa).

The segment at 79–82 is involved in Mg(2+) ion dislocation from EF-Tu; that stretch reads TDFV.

The protein belongs to the EF-Ts family.

It localises to the cytoplasm. Its function is as follows. Associates with the EF-Tu.GDP complex and induces the exchange of GDP to GTP. It remains bound to the aminoacyl-tRNA.EF-Tu.GTP complex up to the GTP hydrolysis stage on the ribosome. The sequence is that of Elongation factor Ts from Ehrlichia canis (strain Jake).